Here is a 337-residue protein sequence, read N- to C-terminus: Anthranilate phosphoribosyltransferase (337 aa).

5-phospho-alpha-D-ribose 1-diphosphate contacts are provided by residues glycine 80, 83–84, threonine 88, 90–93, 108–116, and serine 120; these read GD, NIST, and KHGNRSVSS. An anthranilate-binding site is contributed by glycine 80. Serine 92 contacts Mg(2+). Asparagine 111 serves as a coordination point for anthranilate. Residue arginine 166 coordinates anthranilate. Mg(2+) is bound by residues aspartate 225 and glutamate 226.

Belongs to the anthranilate phosphoribosyltransferase family. As to quaternary structure, homodimer. The cofactor is Mg(2+).

It carries out the reaction N-(5-phospho-beta-D-ribosyl)anthranilate + diphosphate = 5-phospho-alpha-D-ribose 1-diphosphate + anthranilate. The protein operates within amino-acid biosynthesis; L-tryptophan biosynthesis; L-tryptophan from chorismate: step 2/5. Its function is as follows. Catalyzes the transfer of the phosphoribosyl group of 5-phosphorylribose-1-pyrophosphate (PRPP) to anthranilate to yield N-(5'-phosphoribosyl)-anthranilate (PRA). The protein is Anthranilate phosphoribosyltransferase of Syntrophobacter fumaroxidans (strain DSM 10017 / MPOB).